Reading from the N-terminus, the 287-residue chain is MASLRDIKSRITSTKKTSQITKAMQMVSAAKLNRAETNAKSFAPYMDKIQEVVFNVGKGAKNAKHPMLVSREVKKTAYLVITSDRGLAGAFNSSVLRNAYRTIQERHQSKDEYTVIAIGRVGRDFFKKREMPILSELVGLGDEVTFAQIKDLTRQTVQMFIDGAFDELHLVYNHFVSAISQEVTEKKVLPLTDFGTSGGKRTASYEFEPDEEEVLEVLLPQYAESLIYGALLDSKASEHAARMTAMKNATDNAKELIDSLSLSYNRARQAAITQEITEIVGGAAALE.

The protein belongs to the ATPase gamma chain family. F-type ATPases have 2 components, CF(1) - the catalytic core - and CF(0) - the membrane proton channel. CF(1) has five subunits: alpha(3), beta(3), gamma(1), delta(1), epsilon(1). CF(0) has three main subunits: a, b and c.

It is found in the cell membrane. Produces ATP from ADP in the presence of a proton gradient across the membrane. The gamma chain is believed to be important in regulating ATPase activity and the flow of protons through the CF(0) complex. This chain is ATP synthase gamma chain, found in Bacillus velezensis (strain DSM 23117 / BGSC 10A6 / LMG 26770 / FZB42) (Bacillus amyloliquefaciens subsp. plantarum).